The following is a 127-amino-acid chain: Holo-[acyl-carrier-protein] synthase (127 aa).

Mg(2+)-binding residues include Asp7 and Glu53.

It belongs to the P-Pant transferase superfamily. AcpS family. Requires Mg(2+) as cofactor.

The protein resides in the cytoplasm. It carries out the reaction apo-[ACP] + CoA = holo-[ACP] + adenosine 3',5'-bisphosphate + H(+). Functionally, transfers the 4'-phosphopantetheine moiety from coenzyme A to a Ser of acyl-carrier-protein. In Herpetosiphon aurantiacus (strain ATCC 23779 / DSM 785 / 114-95), this protein is Holo-[acyl-carrier-protein] synthase.